The sequence spans 161 residues: Large ribosomal subunit protein uL16 (161 aa).

The protein belongs to the universal ribosomal protein uL16 family.

The sequence is that of Large ribosomal subunit protein uL16 from Methanosphaera stadtmanae (strain ATCC 43021 / DSM 3091 / JCM 11832 / MCB-3).